The primary structure comprises 562 residues: Abrin-c (562 aa).

Residues 1–34 (MDKTLKLLILCLAWTCSFSALRCAARTYPPVATN) form the signal peptide. Gln35 is subject to Pyrrolidone carboxylic acid. Residue Glu198 is part of the active site. Asn234 carries an N-linked (GlcNAc...) asparagine glycan. 3 disulfides stabilise this stretch: Cys281–Cys303, Cys320–Cys339, and Cys363–Cys380. Positions 307-434 (YEPTVRIGGR…YLMRQGWRTG (128 aa)) constitute a Ricin B-type lectin 1 domain. One copy of the 1-alpha repeat lies at 317–359 (DGMCVDVYDDGYHNGNRIIAWKCKDRLEENQLWTLKSDKTIRS). Residues 360 to 400 (NGKCLTTEGYAPGNYVMIYDCTSAVAEATYWEIWDNGTIIN) form a 1-beta repeat. N-linked (GlcNAc...) asparagine glycosylation is found at Asn395 and Asn435. One copy of the 1-gamma repeat lies at 403 to 435 (SALVLSAESSSMGGTLTVQTNEYLMRQGWRTGN). The region spanning 437–561 (TSPFVTSISG…GKPNQIWLTL (125 aa)) is the Ricin B-type lectin 2 domain. One copy of the 2-alpha repeat lies at 448–483 (SDLCMQAQGSNVWLADCDNNKKEQQWALYTDGSIRS). Intrachain disulfides connect Cys451-Cys464 and Cys490-Cys507. A 2-beta repeat occupies 487–526 (TNNCLTSKDHKQGSPIVLMACSNGWASQRWLFKNDGSIYN). The stretch at 529-562 (DDMVMDVKRSDPSLKEIILHPYHGKPNQIWLTLF) is one 2-gamma repeat.

This sequence in the N-terminal section; belongs to the ribosome-inactivating protein family. Type 2 RIP subfamily. In terms of assembly, disulfide-linked dimer of A and B chains.

It carries out the reaction Endohydrolysis of the N-glycosidic bond at one specific adenosine on the 28S rRNA.. Its function is as follows. The A chain is responsible for inhibiting protein synthesis through the catalytic inactivation of 60S ribosomal subunits by removing adenine from position 4,324 of 28S rRNA. Abrin-a is more toxic than ricin. Functionally, the B chain is a galactose-specific lectin that facilitates the binding of abrin to the cell membrane that precedes endocytosis. The sequence is that of Abrin-c from Abrus precatorius (Indian licorice).